The chain runs to 338 residues: Probable tRNA pseudouridine synthase B (338 aa).

The active-site Nucleophile is the D78. One can recognise a PUA domain in the interval 245 to 320 (LPKIILRDSA…LAATSVRIMM (76 aa)).

This sequence belongs to the pseudouridine synthase TruB family. Type 2 subfamily.

The enzyme catalyses uridine(55) in tRNA = pseudouridine(55) in tRNA. In terms of biological role, could be responsible for synthesis of pseudouridine from uracil-55 in the psi GC loop of transfer RNAs. The polypeptide is Probable tRNA pseudouridine synthase B (Methanosarcina barkeri (strain Fusaro / DSM 804)).